The sequence spans 249 residues: Putative [LysW]-aminoadipate/[LysW]-glutamate kinase (249 aa).

Residues arginine 64 and asparagine 166 each coordinate substrate.

Belongs to the acetylglutamate kinase family. LysZ subfamily.

The protein localises to the cytoplasm. It carries out the reaction [amino-group carrier protein]-C-terminal-N-(1,4-dicarboxybutan-1-yl)-L-glutamine + ATP = [amino-group carrier protein]-C-terminal-N-(1-carboxy-5-phosphooxy-5-oxopentan-1-yl)-L-glutamine + ADP. It catalyses the reaction [amino-group carrier protein]-C-terminal-gamma-(L-glutamyl)-L-glutamate + ATP = [amino-group carrier protein]-C-terminal-gamma-(5-phospho-L-glutamyl)-L-glutamate + ADP. The protein operates within amino-acid biosynthesis; L-lysine biosynthesis via AAA pathway; L-lysine from L-alpha-aminoadipate (Thermus route): step 2/5. It functions in the pathway amino-acid biosynthesis; L-arginine biosynthesis. Involved in both the arginine and lysine biosynthetic pathways. Phosphorylates the LysW-bound precursors glutamate (for arginine biosynthesis), respectively alpha-aminoadipate (for lysine biosynthesis). This is Putative [LysW]-aminoadipate/[LysW]-glutamate kinase from Pyrococcus horikoshii (strain ATCC 700860 / DSM 12428 / JCM 9974 / NBRC 100139 / OT-3).